Here is a 346-residue protein sequence, read N- to C-terminus: Holliday junction branch migration complex subunit RuvB (346 aa).

The interval T2–Y183 is large ATPase domain (RuvB-L). ATP-binding positions include I22, R23, G64, K67, T68, T69, E130 to F132, R173, Y183, and R220. T68 is a binding site for Mg(2+). The segment at S184–K254 is small ATPAse domain (RuvB-S). The head domain (RuvB-H) stretch occupies residues P257 to G346. R293, R312, and R317 together coordinate DNA.

Belongs to the RuvB family. As to quaternary structure, homohexamer. Forms an RuvA(8)-RuvB(12)-Holliday junction (HJ) complex. HJ DNA is sandwiched between 2 RuvA tetramers; dsDNA enters through RuvA and exits via RuvB. An RuvB hexamer assembles on each DNA strand where it exits the tetramer. Each RuvB hexamer is contacted by two RuvA subunits (via domain III) on 2 adjacent RuvB subunits; this complex drives branch migration. In the full resolvosome a probable DNA-RuvA(4)-RuvB(12)-RuvC(2) complex forms which resolves the HJ.

The protein resides in the cytoplasm. It catalyses the reaction ATP + H2O = ADP + phosphate + H(+). Its function is as follows. The RuvA-RuvB-RuvC complex processes Holliday junction (HJ) DNA during genetic recombination and DNA repair, while the RuvA-RuvB complex plays an important role in the rescue of blocked DNA replication forks via replication fork reversal (RFR). RuvA specifically binds to HJ cruciform DNA, conferring on it an open structure. The RuvB hexamer acts as an ATP-dependent pump, pulling dsDNA into and through the RuvAB complex. RuvB forms 2 homohexamers on either side of HJ DNA bound by 1 or 2 RuvA tetramers; 4 subunits per hexamer contact DNA at a time. Coordinated motions by a converter formed by DNA-disengaged RuvB subunits stimulates ATP hydrolysis and nucleotide exchange. Immobilization of the converter enables RuvB to convert the ATP-contained energy into a lever motion, pulling 2 nucleotides of DNA out of the RuvA tetramer per ATP hydrolyzed, thus driving DNA branch migration. The RuvB motors rotate together with the DNA substrate, which together with the progressing nucleotide cycle form the mechanistic basis for DNA recombination by continuous HJ branch migration. Branch migration allows RuvC to scan DNA until it finds its consensus sequence, where it cleaves and resolves cruciform DNA. This is Holliday junction branch migration complex subunit RuvB from Stenotrophomonas maltophilia (strain K279a).